The primary structure comprises 380 residues: Cystathionine gamma-synthase (380 aa).

Lys-195 is subject to N6-(pyridoxal phosphate)lysine.

Belongs to the trans-sulfuration enzymes family. In terms of assembly, homotetramer. Requires pyridoxal 5'-phosphate as cofactor.

It is found in the cytoplasm. The enzyme catalyses O-succinyl-L-homoserine + L-cysteine = L,L-cystathionine + succinate + H(+). It participates in amino-acid biosynthesis; L-methionine biosynthesis via de novo pathway; L-cystathionine from O-succinyl-L-homoserine: step 1/1. Its activity is regulated as follows. Four natural products, alpha-lapachone, 9-hydroxy-alpha-lapachone, Paulownin, and Yangambin, show strong inhibitory activities against CGS. All these four inhibitors prevent the binding of OSHS to CGS in a non-competitive fashion. These compounds are specific inhibitors against CGS from H.pylori relative to E.coli since they exhibit very low inhibition activities against CGS from E.coli. Catalyzes the formation of L-cystathionine from O-succinyl-L-homoserine (OSHS) and L-cysteine, via a gamma-replacement reaction. In the absence of thiol, catalyzes gamma-elimination to form 2-oxobutanoate, succinate and ammonia. The protein is Cystathionine gamma-synthase (metB) of Helicobacter pylori (Campylobacter pylori).